A 376-amino-acid chain; its full sequence is MYG1 exonuclease (376 aa).

A mitochondrion-targeting transit peptide spans 1-47; it reads MGHRFLRGLLTLLLPPPPLYTRHRMLGPESVPPPKRSRSKLMAPPRI. Ser120 carries the phosphoserine modification. An N6-acetyllysine mark is found at Lys267 and Lys273.

It belongs to the MYG1 family. Ubiquitously expressed, with highest levels in testis.

It is found in the nucleus. Its subcellular location is the nucleoplasm. The protein localises to the mitochondrion matrix. It localises to the nucleolus. Functionally, 3'-5' RNA exonuclease which cleaves in situ on specific transcripts in both nucleus and mitochondrion. Involved in regulating spatially segregated organellar RNA processing, acts as a coordinator of nucleo-mitochondrial crosstalk. In nucleolus, processes pre-ribosomal RNA involved in ribosome assembly and alters cytoplasmic translation. In mitochondrial matrix, processes 3'-termini of the mito-ribosomal and messenger RNAs and controls translation of mitochondrial proteins. The polypeptide is MYG1 exonuclease (Homo sapiens (Human)).